A 90-amino-acid polypeptide reads, in one-letter code: Probable Fe(2+)-trafficking protein (90 aa).

This sequence belongs to the Fe(2+)-trafficking protein family.

In terms of biological role, could be a mediator in iron transactions between iron acquisition and iron-requiring processes, such as synthesis and/or repair of Fe-S clusters in biosynthetic enzymes. The protein is Probable Fe(2+)-trafficking protein of Cupriavidus necator (strain ATCC 17699 / DSM 428 / KCTC 22496 / NCIMB 10442 / H16 / Stanier 337) (Ralstonia eutropha).